The following is a 204-amino-acid chain: MILGIDEAGRGCLAGSLFVAGVVCGEKTALEFLEMGLKDSKKLGPKKRFFLEDKIKTHGEIKFWVVKKSANEIDNLGLGACLKLAVQEILENGRSLANQIKIDGNTAFGLNKRYPNIQTIIKGDERIAQIAMASVLAKAFKDREMRQLHALFKEYGWDKNCGYGTKQHIEAMIKLGATPFHRHSFTLKNRILNPKLLDVEQRLI.

Residues 1 to 197 (MILGIDEAGR…KNRILNPKLL (197 aa)) enclose the RNase H type-2 domain. Asp6, Glu7, and Asp103 together coordinate a divalent metal cation.

The protein belongs to the RNase HII family. Mn(2+) is required as a cofactor. The cofactor is Mg(2+).

It localises to the cytoplasm. It catalyses the reaction Endonucleolytic cleavage to 5'-phosphomonoester.. In terms of biological role, endonuclease that specifically degrades the RNA of RNA-DNA hybrids. This Helicobacter pylori (strain Shi470) protein is Ribonuclease HII.